The following is a 170-amino-acid chain: Adenine phosphoribosyltransferase (170 aa).

Belongs to the purine/pyrimidine phosphoribosyltransferase family. Homodimer.

It is found in the cytoplasm. The catalysed reaction is AMP + diphosphate = 5-phospho-alpha-D-ribose 1-diphosphate + adenine. It functions in the pathway purine metabolism; AMP biosynthesis via salvage pathway; AMP from adenine: step 1/1. Catalyzes a salvage reaction resulting in the formation of AMP, that is energically less costly than de novo synthesis. The sequence is that of Adenine phosphoribosyltransferase from Bacillus mycoides (strain KBAB4) (Bacillus weihenstephanensis).